A 143-amino-acid polypeptide reads, in one-letter code: Hemoglobin subunit alpha-2 (143 aa).

Serine 2 is modified (N-acetylserine). One can recognise a Globin domain in the interval 2-143 (SLSSKDKATV…LALALSEKYR (142 aa)). Residue histidine 60 participates in O2 binding. Heme b is bound at residue histidine 89.

Belongs to the globin family. Hb 2 is a heterotetramer of two alpha-2 and two beta-1 chains. Hb 3 is a heterotetramer of two alpha-2 and two beta-2 chains. Red blood cells.

Involved in oxygen transport from gills to the various peripheral tissues. This is Hemoglobin subunit alpha-2 (hba2) from Arctogadus glacialis (Arctic cod).